A 221-amino-acid polypeptide reads, in one-letter code: UPF0758 protein NTHI1125 (221 aa).

One can recognise an MPN domain in the interval 98-221 (PIINDLETVK…CYSFAENCLL (124 aa)). Zn(2+)-binding residues include histidine 170, histidine 172, and aspartate 183. A JAMM motif motif is present at residues 170-183 (HNHPSGITEPSYSD).

Belongs to the UPF0758 family.

In Haemophilus influenzae (strain 86-028NP), this protein is UPF0758 protein NTHI1125.